The following is a 378-amino-acid chain: Putative glutamate--cysteine ligase 2 (378 aa).

Belongs to the glutamate--cysteine ligase type 2 family. YbdK subfamily.

The catalysed reaction is L-cysteine + L-glutamate + ATP = gamma-L-glutamyl-L-cysteine + ADP + phosphate + H(+). Its function is as follows. ATP-dependent carboxylate-amine ligase which exhibits weak glutamate--cysteine ligase activity. This Ectopseudomonas mendocina (strain ymp) (Pseudomonas mendocina) protein is Putative glutamate--cysteine ligase 2.